Here is a 445-residue protein sequence, read N- to C-terminus: tRNA-2-methylthio-N(6)-dimethylallyladenosine synthase (445 aa).

The 116-residue stretch at 2–117 (QGLYIKSYGC…LPELIVKARK (116 aa)) folds into the MTTase N-terminal domain. C11, C47, C80, C157, C161, and C164 together coordinate [4Fe-4S] cluster. A Radical SAM core domain is found at 143 to 374 (KNQKVSAFIS…QELVHKQQLE (232 aa)). In terms of domain architecture, TRAM spans 377-441 (KKMIGETHPV…KNHLTGIIPH (65 aa)).

The protein belongs to the methylthiotransferase family. MiaB subfamily. Monomer. The cofactor is [4Fe-4S] cluster.

The protein resides in the cytoplasm. The enzyme catalyses N(6)-dimethylallyladenosine(37) in tRNA + (sulfur carrier)-SH + AH2 + 2 S-adenosyl-L-methionine = 2-methylsulfanyl-N(6)-dimethylallyladenosine(37) in tRNA + (sulfur carrier)-H + 5'-deoxyadenosine + L-methionine + A + S-adenosyl-L-homocysteine + 2 H(+). Functionally, catalyzes the methylthiolation of N6-(dimethylallyl)adenosine (i(6)A), leading to the formation of 2-methylthio-N6-(dimethylallyl)adenosine (ms(2)i(6)A) at position 37 in tRNAs that read codons beginning with uridine. In Ehrlichia ruminantium (strain Gardel), this protein is tRNA-2-methylthio-N(6)-dimethylallyladenosine synthase.